Here is an 854-residue protein sequence, read N- to C-terminus: Discoidin domain-containing receptor 2 (854 aa).

A signal peptide spans 1–21 (MIPIPRMPLVLLLLLLILGSA). Topologically, residues 22 to 399 (KAQVNPAICR…MLKVDDSNTR (378 aa)) are extracellular. Residues 30 to 185 (CRYPLGMSGG…VCMRVELYGC (156 aa)) enclose the F5/8 type C domain. Intrachain disulfides connect Cys30/Cys185 and Cys73/Cys177. 5 N-linked (GlcNAc...) asparagine glycosylation sites follow: Asn121, Asn213, Asn261, Asn280, and Asn372. The chain crosses the membrane as a helical span at residues 400–421 (ILIGCLVAIIFILLAIIVIILW). Residues 422–854 (RQFWQKMLEK…HLLLLQQGAE (433 aa)) lie on the Cytoplasmic side of the membrane. The segment at 452–471 (SMFNNNRSSSPSEQESNSTY) is disordered. Low complexity predominate over residues 455 to 469 (NNNRSSSPSEQESNS). Position 471 is a phosphotyrosine; by SRC and autocatalysis (Tyr471). Residues 563–848 (LAFKEKLGEG…PSFQEIHLLL (286 aa)) form the Protein kinase domain. ATP is bound by residues 569–577 (LGEGQFGEV) and Lys608. Asp709 acts as the Proton acceptor in catalysis. Phosphotyrosine; by SRC and autocatalysis is present on residues Tyr735, Tyr739, and Tyr740.

It belongs to the protein kinase superfamily. Tyr protein kinase family. Insulin receptor subfamily. In terms of assembly, binds hydroxyproline-rich sequence motifs in fibrillar, glycosylated collagen, such as the GQOGVMGFO motif, where O stands for hydroxyproline. Interacts with SRC. Interacts (tyrosine phosphorylated) with SHC1. N-glycosylated. Post-translationally, tyrosine phosphorylated in response to collagen binding. Phosphorylated by SRC; this is required for activation and subsequent autophosphorylation on additional tyrosine residues. As to expression, widely expressed. Detected in lung, ovary, skin and in testis Leydig cells (at protein level). Widely expressed. Detected at high levels in heart, lung, skeletal muscle, central nervous system (CNS) and kidney, and at lower levels in brain and testis. Detected in chondrocytes in tibia growth plates of young mice.

The protein localises to the cell membrane. It catalyses the reaction L-tyrosyl-[protein] + ATP = O-phospho-L-tyrosyl-[protein] + ADP + H(+). Its activity is regulated as follows. Present in an inactive state in the absence of collagen binding and phosphorylation by SRC. Tyrosine phosphorylation enhances the affinity for ATP and the catalytic activity. Tyrosine kinase that functions as a cell surface receptor for fibrillar collagen and regulates cell differentiation, remodeling of the extracellular matrix, cell migration and cell proliferation. Required for normal bone development. Regulates osteoblast differentiation and chondrocyte maturation via a signaling pathway that involves MAP kinases and leads to the activation of the transcription factor RUNX2. Regulates remodeling of the extracellular matrix by up-regulation of the collagenases MMP1, MMP2 and MMP13, and thereby facilitates cell migration and tumor cell invasion. Promotes fibroblast migration and proliferation, and thereby contributes to cutaneous wound healing. In Mus musculus (Mouse), this protein is Discoidin domain-containing receptor 2 (Ddr2).